A 424-amino-acid chain; its full sequence is Serine hydroxymethyltransferase 1 (424 aa).

Residues Leu-125 and 129–131 contribute to the (6S)-5,6,7,8-tetrahydrofolate site; that span reads GHL. N6-(pyridoxal phosphate)lysine is present on Lys-234.

It belongs to the SHMT family. Homodimer. Requires pyridoxal 5'-phosphate as cofactor.

It localises to the cytoplasm. The enzyme catalyses (6R)-5,10-methylene-5,6,7,8-tetrahydrofolate + glycine + H2O = (6S)-5,6,7,8-tetrahydrofolate + L-serine. The protein operates within one-carbon metabolism; tetrahydrofolate interconversion. Its pathway is amino-acid biosynthesis; glycine biosynthesis; glycine from L-serine: step 1/1. Its function is as follows. Catalyzes the reversible interconversion of serine and glycine with tetrahydrofolate (THF) serving as the one-carbon carrier. This reaction serves as the major source of one-carbon groups required for the biosynthesis of purines, thymidylate, methionine, and other important biomolecules. Also exhibits THF-independent aldolase activity toward beta-hydroxyamino acids, producing glycine and aldehydes, via a retro-aldol mechanism. The protein is Serine hydroxymethyltransferase 1 of Burkholderia lata (strain ATCC 17760 / DSM 23089 / LMG 22485 / NCIMB 9086 / R18194 / 383).